Consider the following 386-residue polypeptide: NADPH-dependent alkenal/one oxidoreductase, chloroplastic (386 aa).

This sequence belongs to the zinc-containing alcohol dehydrogenase family. Quinone oxidoreductase subfamily.

Its subcellular location is the plastid. The protein localises to the chloroplast. In terms of biological role, reduces the double bond in short-chain unsaturated carbonyls. Acts preferentially on alpha,beta-unsaturated ketones rather on alpha,beta-unsaturated aldehydes. Has no activity with (E)-2-hexenal and (E)-2-pentenal. Contributes to detoxify stromal reactive carbonyls produced under oxidative stress. This chain is NADPH-dependent alkenal/one oxidoreductase, chloroplastic, found in Arabidopsis thaliana (Mouse-ear cress).